Reading from the N-terminus, the 313-residue chain is WD repeat-containing protein 82 (313 aa).

WD repeat units lie at residues 19–58 (ENSD…PKRT), 105–144 (GHSK…CQGL), 146–184 (HLQG…KGPF), 192–231 (DRTC…VMHT), 236–276 (ANSK…KVAV), and 280–313 (KHTG…TIDD).

This sequence belongs to the WD repeat SWD2 family. As to quaternary structure, component of the SET1/COMPASS complex, at least composed of the catalytic subunit (SETD1A or SETD1B), WDR5, WDR82, RBBP5, ASH2L/ASH2, CXXC1/CFP1, HCFC1 and DPY30. Component of the PNUTS-PP1 phosphatase complex, composed of PPP1R10/PNUTS, TOX4, WDR82, and PPP1CA or PPP1CB or PPP1CC. Associated with multiple protein complexes including an RNA polymerase II complex, MLL3/MLL4 complex and a chaperonin-containing TCP1 complex. Interacts with SETD1B (via N-terminal region); the interaction is direct. Interacts with SETD1A (via N-terminal region); the interaction is direct. Interacts with CUL4B. Interacts with RBBP5. Interacts with POLR2B. Interacts with hyperphosphorylated C-terminal domain (CTD) of RNA polymerase II large subunit (POLR2A). Binds specifically to CTD heptad repeats phosphorylated on 'Ser-5' of each heptad. SETD1A enhances its interaction with POLR2A. Interacts with PPP1R10/PNUTS. Interacts with PPP1CA in the presence of PPP1R10/PNUTS. Interacts with ZC3H4; interaction is independent of the SET1 complex and promotes transcription termination of long non-coding RNAs (lncRNAs).

Its subcellular location is the nucleus. The protein localises to the chromosome. It localises to the cytoplasm. In terms of biological role, regulatory component of the SET1/COMPASS complex implicated in the tethering of this complex to transcriptional start sites of active genes. Facilitates histone H3 'Lys-4' methylation (H3K4me) via recruitment of the SETD1A or SETD1B to the 'Ser-5' phosphorylated C-terminal domain (CTD) of RNA polymerase II large subunit (POLR2A). Component of the PNUTS-PP1 protein phosphatase complex, a protein phosphatase 1 (PP1) complex that promotes RNA polymerase II transcription pause-release, allowing transcription elongation. PNUTS-PP1 also plays a role in the control of chromatin structure and cell cycle progression during the transition from mitosis into interphase. Together with ZC3H4, but independently of the SET1 complex, part of a transcription termination checkpoint that promotes transcription termination of long non-coding RNAs (lncRNAs). The transcription termination checkpoint is activated by the inefficiently spliced first exon of lncRNAs and promotes transcription termination of lncRNAs and their subsequent degradation by the exosome. This chain is WD repeat-containing protein 82, found in Homo sapiens (Human).